We begin with the raw amino-acid sequence, 468 residues long: Probable ubiquitin carboxyl-terminal hydrolase R319 (468 aa).

The USP domain maps to 42–462 (TGIMNLGNTC…NAYILFYIRS (421 aa)). Cysteine 51 (nucleophile) is an active-site residue. The active-site Proton acceptor is histidine 420.

Belongs to the peptidase C19 family.

It carries out the reaction Thiol-dependent hydrolysis of ester, thioester, amide, peptide and isopeptide bonds formed by the C-terminal Gly of ubiquitin (a 76-residue protein attached to proteins as an intracellular targeting signal).. In Acanthamoeba polyphaga (Amoeba), this protein is Probable ubiquitin carboxyl-terminal hydrolase R319.